Consider the following 171-residue polypeptide: 3-hydroxydecanoyl-[acyl-carrier-protein] dehydratase (171 aa).

The active site involves His-70.

Belongs to the thioester dehydratase family. FabA subfamily. Homodimer.

It localises to the cytoplasm. The catalysed reaction is a (3R)-hydroxyacyl-[ACP] = a (2E)-enoyl-[ACP] + H2O. It carries out the reaction (3R)-hydroxydecanoyl-[ACP] = (2E)-decenoyl-[ACP] + H2O. It catalyses the reaction (2E)-decenoyl-[ACP] = (3Z)-decenoyl-[ACP]. The protein operates within lipid metabolism; fatty acid biosynthesis. Its function is as follows. Necessary for the introduction of cis unsaturation into fatty acids. Catalyzes the dehydration of (3R)-3-hydroxydecanoyl-ACP to E-(2)-decenoyl-ACP and then its isomerization to Z-(3)-decenoyl-ACP. Can catalyze the dehydratase reaction for beta-hydroxyacyl-ACPs with saturated chain lengths up to 16:0, being most active on intermediate chain length. This Chromohalobacter salexigens (strain ATCC BAA-138 / DSM 3043 / CIP 106854 / NCIMB 13768 / 1H11) protein is 3-hydroxydecanoyl-[acyl-carrier-protein] dehydratase.